Consider the following 589-residue polypeptide: MTGLLKRKFDQLDEDNSSVSSSSSSSGCQSRSCSPSSSVSRAWDSEEEGPWDQMPLPDRDFCGPRSFTPLSILKRARRERPGRVAFDGITVFYFPRCQGFTSVPSRGGCTLGMALRHSACRRFSLAEFAQEQARARHEKLRQRLKEEKLEMLQWKLSAAGVPQAEAGLPPVVDAIDDASVEEDLAVAVAGGRLEEVSFLQPYPARRRRALLRASGVRRIDREEKRELQALRQSREDCGCHCDRICDPETCSCSLAGIKCQMDHTAFPCGCCREGCENPMGRVEFNQARVQTHFIHTLTRLQLEQEAESFRELEAPAQGSPPSPGEEALVPTFPLAKPPMNNELGDNSCSSDMTDSSTASSSASGTSEAPDCPTHPGLPGPGFQPGVDDDSLARILSFSDSDFGGEEEEEEEGSVGNLDNLSCFHPADIFGTSDPGGLASWTHSYSGCSFTSGVLDENANLDASCFLNGGLEGSREGSLPGTSVPPSMDAGRSSSVDLSLSSCDSFELLQALPDYSLGPHYTSQKVSDSLDNIEAPHFPLPGLSPPGDASSCFLESLMGFSEPAAEALDPFIDSQFEDTVPASLMEPVPV.

2 disordered regions span residues 1-62 (MTGL…RDFC) and 309-388 (FREL…GVDD). 2 stretches are compositionally biased toward low complexity: residues 17–41 (SSVS…SVSR) and 345–368 (DNSC…TSEA).

Belongs to the AXUD1 family. Ubiquitous. Most abundantly expressed in lung, placenta, skeletal muscle, pancreas and leukocyte. Frequently down-regulated in lung, kidney, liver and colon cancers compared with their corresponding normal tissues.

The protein localises to the nucleus. Binds to the consensus sequence 5'-AGAGTG-3' and has transcriptional activator activity. May have a tumor-suppressor function. May play a role in apoptosis. In Homo sapiens (Human), this protein is Cysteine/serine-rich nuclear protein 1 (CSRNP1).